The chain runs to 767 residues: ABC transporter B family member 4 (767 aa).

Residues 81–104 (NYSSSSNSGNNNNNNYNNKNNNNN) form a disordered region. Transmembrane regions (helical) follow at residues 208–228 (IWLFGFGIITAFFSSWVGLQI), 252–272 (AIFILLAQAGLNFLYSTMISV), 324–344 (VSLGVKSFGQIVGGVISLILI), 350–370 (LGMMTILPTMVSVGTFYAGWL), and 429–449 (IGIFQGVTSLALNSVSLLVYW). Residues 211–491 (FGFGIITAFF…LSILFTQIMS (281 aa)) enclose the ABC transmembrane type-1 domain. Residues 524–760 (IKFINVDFKY…KGLYYKLVQR (237 aa)) form the ABC transporter domain. 559-566 (GSSGGGKS) contacts ATP.

This sequence belongs to the ABC transporter superfamily. ABCB family. Multidrug resistance exporter (TC 3.A.1.201) subfamily.

It is found in the membrane. This is ABC transporter B family member 4 (abcB4) from Dictyostelium discoideum (Social amoeba).